Here is a 37-residue protein sequence, read N- to C-terminus: Potassium channel toxin alpha-KTx 1.4 (37 aa).

3 disulfide bridges follow: C7–C28, C13–C33, and C17–C35.

Belongs to the short scorpion toxin superfamily. Potassium channel inhibitor family. Alpha-KTx 01 subfamily. In terms of tissue distribution, expressed by the venom gland.

The protein resides in the secreted. Its function is as follows. Blocks selectively the high conductance calcium-activated (maxi-K) potassium channels. This Centruroides limbatus (Bark scorpion) protein is Potassium channel toxin alpha-KTx 1.4.